The chain runs to 422 residues: UDP-N-acetylglucosamine 1-carboxyvinyltransferase (422 aa).

Position 22–23 (22–23 (KN)) interacts with phosphoenolpyruvate. Position 93 (R93) interacts with UDP-N-acetyl-alpha-D-glucosamine. Residue C117 is the Proton donor of the active site. C117 carries the 2-(S-cysteinyl)pyruvic acid O-phosphothioketal modification. Residues 122–126 (RPVDL), 162–165 (KVSV), D307, and I329 contribute to the UDP-N-acetyl-alpha-D-glucosamine site.

The protein belongs to the EPSP synthase family. MurA subfamily.

It localises to the cytoplasm. It catalyses the reaction phosphoenolpyruvate + UDP-N-acetyl-alpha-D-glucosamine = UDP-N-acetyl-3-O-(1-carboxyvinyl)-alpha-D-glucosamine + phosphate. It functions in the pathway cell wall biogenesis; peptidoglycan biosynthesis. In terms of biological role, cell wall formation. Adds enolpyruvyl to UDP-N-acetylglucosamine. The sequence is that of UDP-N-acetylglucosamine 1-carboxyvinyltransferase from Hamiltonella defensa subsp. Acyrthosiphon pisum (strain 5AT).